The following is a 433-amino-acid chain: MQRRDDSSARMGRGPGGPGSARQGGPNPRRSPRGGGGRGAGAQHPQPLLTGGAAAGSSGAQGPAAANPAPLLPGGAVKMEPENKYLPELMAEKDSLDPSSTHAMQLLSAEIEKIQKGETTKKDEEENYLDLFSHKNMKLKERVLIPVKQYPKFNFVGKILGPQGNTIKRLQEETGAKISVLGKGSMRDKAKEEELRKGGDPKYAHLNMDLHVFIEVFGPPCEAYALMAHAMEEVKKFLVPDMMDDICQEQFLELSYLNGVPEPTRGRGGPVRGRGAAPPPPPPVPRGRGVGPPPPPPPPRGALVRGAPVRGAIARGAAVARGVPPPPAVRGAPAPRARAAGIQRIPLPPPPAPETYEEYGYDDAYADQSYEGYEGYYSQGQGDTEYYDYGHGEAQETYEAYGQDDWNGTRPSLKAPPARPVKGAYREHPYGRY.

The interval 1–79 (MQRRDDSSAR…PLLPGGAVKM (79 aa)) is disordered. Residues 41-76 (GAQHPQPLLTGGAAAGSSGAQGPAAANPAPLLPGGA) show a composition bias toward low complexity. The interval 82 to 243 (ENKYLPELMA…VKKFLVPDMM (162 aa)) is involved in homodimerization. Residues 171-197 (QEETGAKISVLGKGSMRDKAKEEELRK) form the KH domain. Disordered regions lie at residues 259-305 (GVPE…ALVR), 317-351 (AAVARGVPPPPAVRGAPAPRARAAGIQRIPLPPPP), and 403-433 (QDDWNGTRPSLKAPPARPVKGAYREHPYGRY). Pro residues predominate over residues 277–300 (APPPPPPVPRGRGVGPPPPPPPPR). The segment covering 329-342 (VRGAPAPRARAAGI) has biased composition (low complexity). The span at 424–433 (AYREHPYGRY) shows a compositional bias: basic and acidic residues.

This sequence belongs to the KHDRBS family. As to quaternary structure, self-associates to form homooligomers when bound to RNA, oligomerization appears to be limited when binding to proteins. Tyrosine phosphorylated by several non-receptor tyrosine kinases including LCK, FYN and JAK3. In terms of processing, acetylated. Positively correlates with ability to bind RNA. Post-translationally, methylated by HRMT1L2. Required for nuclear localization.

The protein localises to the nucleus. It localises to the cytoplasm. Its subcellular location is the membrane. Its function is as follows. Recruited and tyrosine phosphorylated by several receptor systems, for example the T-cell, leptin and insulin receptors. Once phosphorylated, functions as an adapter protein in signal transduction cascades by binding to SH2 and SH3 domain-containing proteins. Role in G2-M progression in the cell cycle. Represses CBP-dependent transcriptional activation apparently by competing with other nuclear factors for binding to CBP. Also acts as a putative regulator of mRNA stability and/or translation rates and mediates mRNA nuclear export. Plays a role in the regulation of alternative splicing and influences mRNA splice site selection and exon inclusion. The sequence is that of KH domain-containing, RNA-binding, signal transduction-associated protein 1 from Gallus gallus (Chicken).